The primary structure comprises 385 residues: Acetate kinase (385 aa).

Asn-9 provides a ligand contact to Mg(2+). Lys-16 is an ATP binding site. Position 87 (Arg-87) interacts with substrate. Asp-144 functions as the Proton donor/acceptor in the catalytic mechanism. ATP is bound by residues 202–206 (HLGSG) and 277–279 (DMR). Residue Glu-373 coordinates Mg(2+).

The protein belongs to the acetokinase family. Homodimer. It depends on Mg(2+) as a cofactor. Mn(2+) is required as a cofactor.

Its subcellular location is the cytoplasm. It catalyses the reaction acetate + ATP = acetyl phosphate + ADP. It functions in the pathway metabolic intermediate biosynthesis; acetyl-CoA biosynthesis; acetyl-CoA from acetate: step 1/2. Functionally, catalyzes the formation of acetyl phosphate from acetate and ATP. Can also catalyze the reverse reaction. The polypeptide is Acetate kinase (Rickettsia felis (strain ATCC VR-1525 / URRWXCal2) (Rickettsia azadi)).